The sequence spans 175 residues: Cytochrome c-type biogenesis protein CcmE (175 aa).

Topologically, residues 1-8 (MNAVRRKK) are cytoplasmic. The helical; Signal-anchor for type II membrane protein transmembrane segment at 9–29 (LIWVAATLAGAIIAVLLVIYA) threads the bilayer. Residues 30–175 (IGQQTDYYFD…GNHTTSTLQE (146 aa)) are Periplasmic-facing. Heme-binding residues include His-124 and Tyr-128. The interval 142 to 175 (AAKGVTPTSEQFSPAIPVKQTAGEGNHTTSTLQE) is disordered.

Belongs to the CcmE/CycJ family.

It is found in the cell inner membrane. Functionally, heme chaperone required for the biogenesis of c-type cytochromes. Transiently binds heme delivered by CcmC and transfers the heme to apo-cytochromes in a process facilitated by CcmF and CcmH. The sequence is that of Cytochrome c-type biogenesis protein CcmE from Psychrobacter sp. (strain PRwf-1).